The sequence spans 272 residues: Energy-coupling factor transporter ATP-binding protein EcfA1 (272 aa).

The region spanning 2–237 (IKVSDVCFSY…KNIIEKAKID (236 aa)) is the ABC transporter domain. An ATP-binding site is contributed by 37–44 (GHNGSGKS).

It belongs to the ABC transporter superfamily. Energy-coupling factor EcfA family. Forms a stable energy-coupling factor (ECF) transporter complex composed of 2 membrane-embedded substrate-binding proteins (S component), 2 ATP-binding proteins (A component) and 2 transmembrane proteins (T component).

The protein resides in the cell membrane. ATP-binding (A) component of a common energy-coupling factor (ECF) ABC-transporter complex. Unlike classic ABC transporters this ECF transporter provides the energy necessary to transport a number of different substrates. The protein is Energy-coupling factor transporter ATP-binding protein EcfA1 of Mesomycoplasma hyopneumoniae (strain 7448) (Mycoplasma hyopneumoniae).